Here is a 310-residue protein sequence, read N- to C-terminus: Protein CUP-SHAPED COTYLEDON 1 (310 aa).

Residues 20 to 172 (MPPGFRFHPT…EWVLCKVCLK (153 aa)) form the NAC domain. The DNA-binding element occupies 119-178 (LGMKKTLVFYKGRAPKGEKSCWVMHEYRLDGKFSYHYISSSAKDEWVLCKVCLKSGVVSR). Involved in transactivation activity stretches follow at residues 179-210 (ETNL…NTFA) and 306-310 (WPFTL).

As to expression, expressed in inflorescence stems, rosette leaves, aerial parts of seedlings, flowers, floral buds and roots.

It is found in the nucleus. Functionally, transcription activator of STM and KNAT6. Involved in molecular mechanisms regulating shoot apical meristem (SAM) formation during embryogenesis and organ separation. Required for the fusion of septa of gynoecia along the length of the ovaries. Activates the shoot formation in callus in a STM-dependent manner. Seems to act as an inhibitor of cell division. The polypeptide is Protein CUP-SHAPED COTYLEDON 1 (NAC054) (Arabidopsis thaliana (Mouse-ear cress)).